Reading from the N-terminus, the 101-residue chain is Large ribosomal subunit protein eL30 (101 aa).

The protein belongs to the eukaryotic ribosomal protein eL30 family.

This is Large ribosomal subunit protein eL30 from Pyrobaculum neutrophilum (strain DSM 2338 / JCM 9278 / NBRC 100436 / V24Sta) (Thermoproteus neutrophilus).